Consider the following 449-residue polypeptide: Secretin receptor (449 aa).

Positions 1-25 (MLSTMRPRLSLLLLRLLLLTKAAHT) are cleaved as a signal peptide. The Extracellular segment spans residues 26 to 141 (VGVPPRLCDV…NERRHAYLLK (116 aa)). 3 disulfides stabilise this stretch: Cys-46–Cys-75, Cys-66–Cys-107, and Cys-89–Cys-123. N-linked (GlcNAc...) asparagine glycosylation is found at Asn-72, Asn-100, Asn-106, and Asn-128. A helical transmembrane segment spans residues 142 to 167 (LKVMYTVGYSSSLAMLLVALSILCSF). Residues 168-174 (RRLHCTR) are Cytoplasmic-facing. Residues 175 to 195 (NYIHMHLFVSFILRALSNFIK) form a helical membrane-spanning segment. Topologically, residues 196–216 (DAVLFSSDDVTYCDAHKVGCK) are extracellular. Cysteines 215 and 285 form a disulfide. A helical membrane pass occupies residues 217 to 239 (LVMIFFQYCIMANYAWLLVEGLY). Residues 240 to 254 (LHTLLAISFFSERKY) lie on the Cytoplasmic side of the membrane. Residues 255–276 (LQAFVLLGWGSPAIFVALWAIT) traverse the membrane as a helical segment. The Extracellular segment spans residues 277-291 (RHFLENTGCWDINAN). N-linked (GlcNAc...) asparagine glycosylation is present at Asn-291. Residues 292–315 (ASVWWVIRGPVILSILINFIFFIN) traverse the membrane as a helical segment. Residues 316–340 (ILRILMRKLRTQETRGSETNHYKRL) lie on the Cytoplasmic side of the membrane. A helical membrane pass occupies residues 341-356 (AKSTLLLIPLFGIHYI). The Extracellular portion of the chain corresponds to 357–367 (VFAFSPEDAME). The chain crosses the membrane as a helical span at residues 368–391 (VQLFFELALGSFQGLVVAVLYCFL). The Cytoplasmic segment spans residues 392–449 (NGEVQLEVQKKWRQWHLQEFPLRPVAFNNSFSNATNGPTHSTKASTEQSRSIPRASII). Residues 425-442 (ATNGPTHSTKASTEQSRS) are compositionally biased toward polar residues. The tract at residues 425 to 449 (ATNGPTHSTKASTEQSRSIPRASII) is disordered.

Belongs to the G-protein coupled receptor 2 family. In terms of processing, phosphorylated on Ser and Thr residues at the cytoplasmic C-terminus by G protein-coupled receptor kinases (GRKs). N-glycosylated. In terms of tissue distribution, in the brain, expressed in the central amygdala, hippocampus, area postrema, nucleus of the tractus solitary and cerebellum.

The protein resides in the cell membrane. Its subcellular location is the basolateral cell membrane. Its function is as follows. G protein-coupled receptor activated by secretin (SCT), which is involved in different processes such as regulation of the pH of the duodenal content, food intake and water homeostasis. Ligand binding causes a conformation change that triggers signaling via guanine nucleotide-binding proteins (G proteins) and activates cAMP-dependent pathway. Upon binding to secretin, regulates the pH of the duodenum by (1) inhibiting the secretion of gastric acid from the parietal cells of the stomach and (2) stimulating the production of bicarbonate (NaHCO(3)) from the ductal cells of the pancreas. In addition to regulating the pH of the duodenal content, plays a central role in diet induced thermogenesis: acts as a non-sympathetic brown fat (BAT) activator mediating prandial thermogenesis, which consequentially induces satiation. Mechanistically, secretin released by the gut after a meal binds to secretin receptor (SCTR) in brown adipocytes, activating brown fat thermogenesis by stimulating lipolysis, which is sensed in the brain and promotes satiation. Also able to stimulate lipolysis in white adipocytes. Also plays an important role in cellular osmoregulation by regulating renal water reabsorption. Also plays a role in the central nervous system: required for synaptic plasticity. In Rattus norvegicus (Rat), this protein is Secretin receptor.